A 474-amino-acid chain; its full sequence is MADLWDDIYNDTKLLEELAPIAIDAALLQGVLMRTKESPNSSDVVSFAPFALLPSPVPKALFEQAKCVQEDFNTLVDRISQDTSFLEQVLSSTIKVDDFIRRLFAIHKQVQQEDCTQEVFLGINRSDYMFDCRDDGTPALKQIEINTIAASFGGLASRTPAVHQHVLKFLRKSEESSSILTNDAVEGIGWGIAHAWALYGSVDATVMFLVENEQRNILDQRFIEAELCKRNVRVIRRRLADVFERGTLDEERHLFIDGYEVAVAYFRTGYVPQDYTEQDWEARLMLERSRAVKCPDVPTQLVGTKKVQQELSRPQILEKFLPDKPEAVARIRETFTGLYSLDIGEEGDEAVRVALANPDQFVLKPQREGGGNNLYGEELKEKLQECKDSEERTSYILMDKINPKPLKNCLLRAGGRVQISECISELGMFGVYVRHRDQMIYYDQVGHLLRTKAIEHSDGGVAAGVAVLDNPYLV.

R125 contributes to the substrate binding site. E144 lines the ATP pocket. Mg(2+)-binding residues include E144 and N146. Residues 148–151, 214–216, Q220, and 267–270 each bind substrate; these read IAAS, QRN, and RTGY. Residues K305, 364–373, Y375, 398–401, and E425 contribute to the ATP site; these read KPQREGGGNN and MDKI. E368 provides a ligand contact to Mg(2+). A substrate-binding site is contributed by R450. 2 residues coordinate ATP: K452 and D458. 461-462 serves as a coordination point for substrate; it reads VA.

The protein belongs to the eukaryotic GSH synthase family. Homodimer. Requires Mg(2+) as cofactor. As to expression, expressed ubiquitously.

The enzyme catalyses gamma-L-glutamyl-L-cysteine + glycine + ATP = glutathione + ADP + phosphate + H(+). It carries out the reaction gamma-L-glutamyl-(2S)-2-aminobutanoate + glycine + ATP = ophthalmate + ADP + phosphate + H(+). Its pathway is sulfur metabolism; glutathione biosynthesis; glutathione from L-cysteine and L-glutamate: step 2/2. Functionally, catalyzes the production of glutathione from gamma-glutamylcysteine and glycine in an ATP-dependent manner. Glutathione (gamma-glutamylcysteinylglycine, GSH) is the most abundant intracellular thiol in living aerobic cells and is required for numerous processes including the protection of cells against oxidative damage, amino acid transport, the detoxification of foreign compounds, the maintenance of protein sulfhydryl groups in a reduced state and acts as a cofactor for a number of enzymes. Participates in ophthalmate biosynthesis in hepatocytes. The protein is Glutathione synthetase of Xenopus laevis (African clawed frog).